Here is a 168-residue protein sequence, read N- to C-terminus: Cyclic pyranopterin monophosphate synthase (168 aa).

Residues 81 to 83 (LCH) and 117 to 118 (ME) each bind substrate. Residue Asp132 is part of the active site.

It belongs to the MoaC family. Homohexamer; trimer of dimers.

It carries out the reaction (8S)-3',8-cyclo-7,8-dihydroguanosine 5'-triphosphate = cyclic pyranopterin phosphate + diphosphate. It participates in cofactor biosynthesis; molybdopterin biosynthesis. Catalyzes the conversion of (8S)-3',8-cyclo-7,8-dihydroguanosine 5'-triphosphate to cyclic pyranopterin monophosphate (cPMP). This chain is Cyclic pyranopterin monophosphate synthase, found in Deinococcus radiodurans (strain ATCC 13939 / DSM 20539 / JCM 16871 / CCUG 27074 / LMG 4051 / NBRC 15346 / NCIMB 9279 / VKM B-1422 / R1).